Here is a 178-residue protein sequence, read N- to C-terminus: Putative magnesium-dependent phosphatase YER134C (178 aa).

The Nucleophile role is filled by Asp-11. Asp-11 provides a ligand contact to Mg(2+). 4 residues coordinate phosphate: Leu-12, Asp-13, Ser-74, and Arg-75. Asp-13 contacts Mg(2+). The Proton donor role is filled by Asp-13. Arg-75 provides a ligand contact to substrate. Asp-141 contributes to the Mg(2+) binding site.

It belongs to the HAD-like hydrolase superfamily.

The protein localises to the cytoplasm. The protein resides in the nucleus. It catalyses the reaction O-phospho-L-tyrosyl-[protein] + H2O = L-tyrosyl-[protein] + phosphate. In terms of biological role, magnesium-dependent phosphatase which may act as a tyrosine phosphatase. The sequence is that of Putative magnesium-dependent phosphatase YER134C from Saccharomyces cerevisiae (strain ATCC 204508 / S288c) (Baker's yeast).